A 275-amino-acid polypeptide reads, in one-letter code: NH(3)-dependent NAD(+) synthetase (275 aa).

Residue G47 to S54 participates in ATP binding. D53 serves as a coordination point for Mg(2+). Deamido-NAD(+) is bound at residue R139. Position 159 (T159) interacts with ATP. E164 serves as a coordination point for Mg(2+). Residues K172 and D179 each contribute to the deamido-NAD(+) site. Residues K188 and T210 each coordinate ATP. H259 to K260 contacts deamido-NAD(+).

The protein belongs to the NAD synthetase family. As to quaternary structure, homodimer.

It carries out the reaction deamido-NAD(+) + NH4(+) + ATP = AMP + diphosphate + NAD(+) + H(+). It participates in cofactor biosynthesis; NAD(+) biosynthesis; NAD(+) from deamido-NAD(+) (ammonia route): step 1/1. Catalyzes the ATP-dependent amidation of deamido-NAD to form NAD. Uses ammonia as a nitrogen source. The polypeptide is NH(3)-dependent NAD(+) synthetase (Staphylococcus epidermidis (strain ATCC 35984 / DSM 28319 / BCRC 17069 / CCUG 31568 / BM 3577 / RP62A)).